Here is a 693-residue protein sequence, read N- to C-terminus: Elongation factor G (693 aa).

A tr-type G domain is found at 8–282; sequence EKTRNIGIMA…AVIDYLPSPL (275 aa). GTP-binding positions include 17-24, 81-85, and 135-138; these read AHVDAGKT, DTPGH, and NKMD.

This sequence belongs to the TRAFAC class translation factor GTPase superfamily. Classic translation factor GTPase family. EF-G/EF-2 subfamily.

The protein resides in the cytoplasm. In terms of biological role, catalyzes the GTP-dependent ribosomal translocation step during translation elongation. During this step, the ribosome changes from the pre-translocational (PRE) to the post-translocational (POST) state as the newly formed A-site-bound peptidyl-tRNA and P-site-bound deacylated tRNA move to the P and E sites, respectively. Catalyzes the coordinated movement of the two tRNA molecules, the mRNA and conformational changes in the ribosome. The polypeptide is Elongation factor G (Streptococcus pneumoniae (strain ATCC 700669 / Spain 23F-1)).